The chain runs to 103 residues: Pyrimidine/purine nucleoside phosphorylase (103 aa).

Belongs to the nucleoside phosphorylase PpnP family.

The enzyme catalyses a purine D-ribonucleoside + phosphate = a purine nucleobase + alpha-D-ribose 1-phosphate. It carries out the reaction adenosine + phosphate = alpha-D-ribose 1-phosphate + adenine. The catalysed reaction is cytidine + phosphate = cytosine + alpha-D-ribose 1-phosphate. It catalyses the reaction guanosine + phosphate = alpha-D-ribose 1-phosphate + guanine. The enzyme catalyses inosine + phosphate = alpha-D-ribose 1-phosphate + hypoxanthine. It carries out the reaction thymidine + phosphate = 2-deoxy-alpha-D-ribose 1-phosphate + thymine. The catalysed reaction is uridine + phosphate = alpha-D-ribose 1-phosphate + uracil. It catalyses the reaction xanthosine + phosphate = alpha-D-ribose 1-phosphate + xanthine. In terms of biological role, catalyzes the phosphorolysis of diverse nucleosides, yielding D-ribose 1-phosphate and the respective free bases. Can use uridine, adenosine, guanosine, cytidine, thymidine, inosine and xanthosine as substrates. Also catalyzes the reverse reactions. This chain is Pyrimidine/purine nucleoside phosphorylase, found in Shewanella sp. (strain ANA-3).